The primary structure comprises 322 residues: Probable L-asparaginase (322 aa).

Positions 6-320 constitute an Asparaginase/glutaminase domain; that stretch reads PRLALIHTGG…EDIRRVFTQG (315 aa). The segment at 13-37 is disordered; sequence TGGTIASRPSPDGRGLTPQTPPALP. Thr16 serves as the catalytic O-isoaspartyl threonine intermediate. Residues Ser54 and 85-86 each bind substrate; that span reads TD.

The protein belongs to the asparaginase 1 family.

The protein localises to the cytoplasm. The enzyme catalyses L-asparagine + H2O = L-aspartate + NH4(+). This is Probable L-asparaginase (ansA) from Deinococcus radiodurans (strain ATCC 13939 / DSM 20539 / JCM 16871 / CCUG 27074 / LMG 4051 / NBRC 15346 / NCIMB 9279 / VKM B-1422 / R1).